Here is a 114-residue protein sequence, read N- to C-terminus: Large ribosomal subunit protein P2 (114 aa).

A compositionally biased stretch (low complexity) spans 76-91 (PAAAAAAGGGDSSSAA). The segment at 76–114 (PAAAAAAGGGDSSSAAKETKKEEPEEEEEDGDMGLSLFD) is disordered.

Belongs to the eukaryotic ribosomal protein P1/P2 family. P1 and P2 exist as dimers at the large ribosomal subunit. Phosphorylated.

Functionally, plays an important role in the elongation step of protein synthesis. The polypeptide is Large ribosomal subunit protein P2 (Eimeria tenella (Coccidian parasite)).